The sequence spans 265 residues: Undecaprenyl-diphosphatase (265 aa).

8 consecutive transmembrane segments (helical) span residues 1–21 (MDWF…FLPI), 39–59 (QGLA…MMYY), 83–103 (LKLG…GFLG), 114–134 (ALVI…SDAF), 144–164 (LGVA…IPGT), 188–208 (SFLL…KDLI), 218–238 (MMAL…VFFI), and 244–264 (VGML…LFWL).

It belongs to the UppP family.

It localises to the cell inner membrane. It catalyses the reaction di-trans,octa-cis-undecaprenyl diphosphate + H2O = di-trans,octa-cis-undecaprenyl phosphate + phosphate + H(+). In terms of biological role, catalyzes the dephosphorylation of undecaprenyl diphosphate (UPP). Confers resistance to bacitracin. In Alcanivorax borkumensis (strain ATCC 700651 / DSM 11573 / NCIMB 13689 / SK2), this protein is Undecaprenyl-diphosphatase.